A 642-amino-acid chain; its full sequence is Palmitoyltransferase akr1 (642 aa).

ANK repeat units lie at residues 1–29, 33–62, 67–96, 100–129, 133–162, and 166–196; these read MGSLFLAASQGELDTVKNLISSEKIDVNA, GGATALHWAALNQQIPICKFLLEHGADVNA, LQAAPIHWAAKRGSVKTVHYLVQHGADPLL, QGFNCLHLAVHAASPLLVVYLLHLDISVDL, QQHTPLMWASYHGNEPITNCLLRWGADVLA, and DKMTPLHWSIVGGNLKCMKLILKEGGIPCTA. Over 1–256 the chain is Cytoplasmic; the sequence is MGSLFLAASQ…SKFQFSQKTF (256 aa). 2 helical membrane-spanning segments follow: residues 257–277 and 278–298; these read IIFCFLSSFIITGVFFFIMSI and CPMVISLIIAPLWIYFTFKYI. The Cytoplasmic portion of the chain corresponds to 299 to 316; it reads TTCIHANIDIVHFYLETP. A helical transmembrane segment spans residues 317–337; that stretch reads FLAGIFSSIFFWVWCHSLLYI. The Lumenal portion of the chain corresponds to 338-343; that stretch reads VPKTLP. A helical transmembrane segment spans residues 344–364; the sequence is IKPLSSLLFVLISFTCIGLYV. Topologically, residues 365-444 are cytoplasmic; that stretch reads RTAFQNPGYV…NCVGARNHRT (80 aa). One can recognise a DHHC domain in the interval 400-450; that stretch reads HYCLKCFQVKPPRSYHCGACKRCINRYDHHCPWTGNCVGARNHRTFLLFVF. The active-site S-palmitoyl cysteine intermediate is the Cys430. Residues 445–465 traverse the membrane as a helical segment; that stretch reads FLLFVFTLSTLIPIYFYVAFY. The Lumenal segment spans residues 466–496; it reads YLQNIPIQKKYESYRCLFISGTICQWSLKDM. The helical transmembrane segment at 497–517 threads the bilayer; it reads FVLVASLTLFVNWCWVVVLAF. Residues 518–642 are Cytoplasmic-facing; it reads TQICQVAHNV…GRQDEATRHV (125 aa).

It belongs to the DHHC palmitoyltransferase family. AKR/ZDHHC17 subfamily.

The protein resides in the early endosome membrane. The protein localises to the golgi apparatus membrane. The enzyme catalyses L-cysteinyl-[protein] + hexadecanoyl-CoA = S-hexadecanoyl-L-cysteinyl-[protein] + CoA. Functionally, palmitoyltransferase specific for casein kinase 1. The protein is Palmitoyltransferase akr1 (akr1) of Schizosaccharomyces pombe (strain 972 / ATCC 24843) (Fission yeast).